Here is a 327-residue protein sequence, read N- to C-terminus: Genome polyprotein (327 aa).

The interval 65–102 is disordered; it reads IDAVGDNKKDAKPEQGSIQSNPNKGKEKDVNAGTSGTH.

The protein belongs to the potyviridae genome polyprotein family. In terms of processing, genome polyprotein of potyviruses undergoes post-translational proteolytic processing by the main proteinase NIa-pro resulting in the production of at least ten individual proteins. The P1 proteinase and the HC-pro cleave only their respective C-termini autocatalytically. 6K1 is essential for proper proteolytic separation of P3 from CI.

It localises to the virion. It carries out the reaction RNA(n) + a ribonucleoside 5'-triphosphate = RNA(n+1) + diphosphate. In terms of biological role, an RNA-dependent RNA polymerase that plays an essential role in the virus replication. Its function is as follows. Involved in aphid transmission, cell-to-cell and systemis movement, encapsidation of the viral RNA and in the regulation of viral RNA amplification. The sequence is that of Genome polyprotein from Potato virus Y (strain Chinese) (PVY).